The sequence spans 618 residues: Leucine aminopeptidase 2 (618 aa).

A peptide is bound by residues Q140–Q142 and P272–E277. H301 provides a ligand contact to Zn(2+). The active-site Proton acceptor is the E302. The Zn(2+) site is built by H305 and E324. Y389 serves as the catalytic Proton donor.

It belongs to the peptidase M1 family. Requires Zn(2+) as cofactor.

The protein localises to the cytoplasm. The protein resides in the nucleus. It carries out the reaction an epoxide + H2O = an ethanediol. Aminopeptidase that preferentially cleaves di- and tripeptides. Also has low epoxide hydrolase activity (in vitro). Can hydrolyze the epoxide leukotriene LTA(4) but it forms preferentially 5,6-dihydroxy-7,9,11,14-eicosatetraenoic acid rather than the cytokine leukotriene B(4) as the product compared to the homologous mammalian enzyme (in vitro). This Emericella nidulans (strain FGSC A4 / ATCC 38163 / CBS 112.46 / NRRL 194 / M139) (Aspergillus nidulans) protein is Leucine aminopeptidase 2.